The chain runs to 146 residues: ATP synthase epsilon chain (146 aa).

It belongs to the ATPase epsilon chain family. As to quaternary structure, F-type ATPases have 2 components, CF(1) - the catalytic core - and CF(0) - the membrane proton channel. CF(1) has five subunits: alpha(3), beta(3), gamma(1), delta(1), epsilon(1). CF(0) has three main subunits: a, b and c.

The protein resides in the cell membrane. In terms of biological role, produces ATP from ADP in the presence of a proton gradient across the membrane. This Lactobacillus delbrueckii subsp. bulgaricus (strain ATCC 11842 / DSM 20081 / BCRC 10696 / JCM 1002 / NBRC 13953 / NCIMB 11778 / NCTC 12712 / WDCM 00102 / Lb 14) protein is ATP synthase epsilon chain.